Consider the following 461-residue polypeptide: Pup--protein ligase (461 aa).

Mg(2+) is bound at residue E9. Residue R53 coordinates ATP. Y55 serves as a coordination point for Mg(2+). D57 serves as the catalytic Proton acceptor. Mg(2+) is bound at residue E63. Residues T66 and W420 each coordinate ATP.

The protein belongs to the Pup ligase/Pup deamidase family. Pup-conjugating enzyme subfamily.

The enzyme catalyses ATP + [prokaryotic ubiquitin-like protein]-L-glutamate + [protein]-L-lysine = ADP + phosphate + N(6)-([prokaryotic ubiquitin-like protein]-gamma-L-glutamyl)-[protein]-L-lysine.. Its pathway is protein degradation; proteasomal Pup-dependent pathway. It participates in protein modification; protein pupylation. In terms of biological role, catalyzes the covalent attachment of the prokaryotic ubiquitin-like protein modifier Pup to the proteasomal substrate proteins, thereby targeting them for proteasomal degradation. This tagging system is termed pupylation. The ligation reaction involves the side-chain carboxylate of the C-terminal glutamate of Pup and the side-chain amino group of a substrate lysine. The protein is Pup--protein ligase of Renibacterium salmoninarum (strain ATCC 33209 / DSM 20767 / JCM 11484 / NBRC 15589 / NCIMB 2235).